A 256-amino-acid chain; its full sequence is Indole-3-glycerol phosphate synthase (256 aa).

This sequence belongs to the TrpC family.

The enzyme catalyses 1-(2-carboxyphenylamino)-1-deoxy-D-ribulose 5-phosphate + H(+) = (1S,2R)-1-C-(indol-3-yl)glycerol 3-phosphate + CO2 + H2O. Its pathway is amino-acid biosynthesis; L-tryptophan biosynthesis; L-tryptophan from chorismate: step 4/5. The chain is Indole-3-glycerol phosphate synthase from Pelodictyon phaeoclathratiforme (strain DSM 5477 / BU-1).